The sequence spans 843 residues: Protein P (843 aa).

Residues M1–Q177 are terminal protein domain (TP). Residues E178–H346 are spacer. Disordered stretches follow at residues L218–I243 and T291–Q315. The polymerase/reverse transcriptase domain (RT) stretch occupies residues E347 to Q690. The Reverse transcriptase domain occupies E357–I600. Mg(2+)-binding residues include D429, D551, and D552.

This sequence belongs to the hepadnaviridae P protein family.

It carries out the reaction DNA(n) + a 2'-deoxyribonucleoside 5'-triphosphate = DNA(n+1) + diphosphate. It catalyses the reaction Endonucleolytic cleavage to 5'-phosphomonoester.. Activated by host HSP70 and HSP40 in vitro to be able to bind the epsilon loop of the pgRNA. Because deletion of the RNase H region renders the protein partly chaperone-independent, the chaperones may be needed indirectly to relieve occlusion of the RNA-binding site by this domain. Inhibited by several reverse-transcriptase inhibitors: Lamivudine, Adefovir and Entecavir. In terms of biological role, multifunctional enzyme that converts the viral RNA genome into dsDNA in viral cytoplasmic capsids. This enzyme displays a DNA polymerase activity that can copy either DNA or RNA templates, and a ribonuclease H (RNase H) activity that cleaves the RNA strand of RNA-DNA heteroduplexes in a partially processive 3'- to 5'-endonucleasic mode. Neo-synthesized pregenomic RNA (pgRNA) are encapsidated together with the P protein, and reverse-transcribed inside the nucleocapsid. Initiation of reverse-transcription occurs first by binding the epsilon loop on the pgRNA genome, and is initiated by protein priming, thereby the 5'-end of (-)DNA is covalently linked to P protein. Partial (+)DNA is synthesized from the (-)DNA template and generates the relaxed circular DNA (RC-DNA) genome. After budding and infection, the RC-DNA migrates in the nucleus, and is converted into a plasmid-like covalently closed circular DNA (cccDNA). The activity of P protein does not seem to be necessary for cccDNA generation, and is presumably released from (+)DNA by host nuclear DNA repair machinery. This Hepatitis B virus genotype C subtype ayw (isolate Australia/AustRC/1992) (HBV-C) protein is Protein P.